A 547-amino-acid polypeptide reads, in one-letter code: Mercuric reductase (547 aa).

The region spanning 5-70 (APTELAITGM…AVVASGYGVH (66 aa)) is the HMA domain. Cys-16 and Cys-19 together coordinate a metal cation. Residues Ala-96 and Thr-121 each coordinate FAD. Cys-122 and Cys-127 are oxidised to a cystine. Lys-131, Ala-197, Asp-389, and Val-397 together coordinate FAD. Hg(2+) contacts are provided by Cys-544 and Cys-545.

It belongs to the class-I pyridine nucleotide-disulfide oxidoreductase family. In terms of assembly, homodimer. FAD serves as cofactor.

It carries out the reaction Hg + NADP(+) + H(+) = Hg(2+) + NADPH. Resistance to Hg(2+) in bacteria appears to be governed by a specialized system which includes mercuric reductase. MerA protein is responsible for volatilizing mercury as Hg(0). The chain is Mercuric reductase (merA) from Acidithiobacillus ferrooxidans (Thiobacillus ferrooxidans).